Consider the following 729-residue polypeptide: Ubiquitin carboxyl-terminal hydrolase BAP1 (729 aa).

The UCH catalytic domain maps to 4–235 (GWLELESDPG…IRFNLMAVVP (232 aa)). Positions 56–60 (RRSRR) match the Arg-finger motif motif. C91 serves as the catalytic Nucleophile. The active-site Proton donor is H169. Position 292 is a phosphoserine (S292). The tract at residues 301–351 (APAASEGNHTDGAEEAAGSCAQAPSHSPPNKPKLVVKPPGSSLNGVHPNPT) is disordered. Positions 363–366 (NHNY) match the HBM-like motif motif. A phosphoserine mark is found at S369 and S395. Disordered stretches follow at residues 372–435 (QEEE…SADG) and 464–524 (SIKT…SPVT). Positions 395 to 409 (SDDEDDYEDDEEDDV) are enriched in acidic residues. Residues 480-524 (THSQPSPTPSNESTDTASEIGSAFNSPLRSPIRSANPTRPSSPVT) are compositionally biased toward polar residues. T493 carries the post-translational modification Phosphothreonine. A phosphoserine mark is found at S521, S537, S585, and S597. The segment at 575-623 (LTEGGKGSSPSIRPIQGSQGSSSPVEKEVVEATDSREKTGMVRPGEPLS) is disordered. Positions 582–598 (SSPSIRPIQGSQGSSSP) are enriched in polar residues. An interaction with BRCA1 region spans residues 596–721 (SSPVEKEVVE…QRKPDRRKRS (126 aa)). Basic and acidic residues predominate over residues 599–614 (VEKEVVEATDSREKTG). Residues 636 to 656 (LKCVEAEIANYEACLKEEVEK) adopt a coiled-coil conformation. The tract at residues 642–686 (EIANYEACLKEEVEKRKKFKIDDQRRTHNYDEFICTFISMLAQEG) is interaction with YY1. A ULD domain is found at 670 to 698 (NYDEFICTFISMLAQEGMLANLVEQNISV). The tract at residues 699–701 (RRR) is interaction with nucleosomal DNA forming a DNA clamp with ASXL1. The Classical bipartite Nuclear localization signal (NLS) motif lies at 699–722 (RRRQGVSIGRLHKQRKPDRRKRSR). A disordered region spans residues 703–729 (GVSIGRLHKQRKPDRRKRSRPYKAKRQ). Residues 713-729 (RKPDRRKRSRPYKAKRQ) form a positively charged C-terminal extension (CTE) region. The Non-classical PY-nuclear localization signal (PY-NLS) motif lies at 717–724 (RRKRSRPY).

It belongs to the peptidase C12 family. BAP1 subfamily. Core component of the polycomb repressive deubiquitinase (PR-DUB) complex, at least composed of BAP1, one of ASXL1, ASXL2 or (probably) ASXL3, and one of MBD5 or MBD6. The PR-DUB core associates with a number of accessory proteins, including FOXK1, FOXK2, KDM1B, HCFC1, YY1 and OGT; KDM1B specifically associates with ASXL2 PR-DUB complexes. The BAP1 deubiquitinase activity is not required for PR-DUB assembly. Homodimerizes (via coiled-coil hinge-region between the UCH and ULD domains) to mediate assembly of 2 copies of the BAP1-ASXL heterodimer into a bisymmetric tetramer; dimerization enhances association with nucleosomes. The PR-DUB complex associates with nucleosomes to mediate deubiquitination of 'lys-120' of histone H2AK118ub1 substrates; the association requires the positively charged C-terminal tail of BAP1. Interacts (via ULD domain) with ASXL1 (via DEUBAD domain); the interaction is direct and forms a ubiquitin binding cleft. The interaction with ASXL1 stabilizes BAP1 but is not required for nucleosome binding. Associates (via C-terminus) with nucleosome and chromatosome complexes through direct interaction with DNA and the histone3/4 dimer; this association displaces the histone-2A C-terminal tail, extending and orienting the H2AK118ub1 substrate towards the BAP1 deubiquitinase active site. Also interacts (via arginine finger) directly with the histone H2A-H2B acidic patch; this interaction is not critical for nucleosome-chromatosome association but may play a role in orienting the H2AK118ub1 substrate towards the PR-DUB complex active site. Interacts with BRCA1 (via the RING finger). Interacts (via HBM-like motif) with HCFC1. Interacts (via a C-terminal region overlapping the ULD domain) with YY1; the interaction is direct and requires the interaction with HCFC1. Interacts (when phosphorylated at Thr-493) with FOXK1. Interacts (when phosphorylated at Thr-493) with FOXK2; leading to recruitment of the PR-DUB complex and repression of FOXK2 target genes. Interacts (via non-classical PY-NLS) with TNPO1/transportin-1 (via HEAT repeats 8-12); the interaction is direct, mediates BAP1 nuclear localization and disrupts BAP1 homodimerization. Interacts (via C-terminus) with KPNA1/importin alpha5 and KPNA2/importin alpha1; these interactions can contribute to BAP1 nuclear localization but are less important than the interaction with TNPO1/transportin-1. The interaction with TNPO1/transportin-1 disrupts homodimerization and blocks ubiquitination by UBE2O. Ubiquitinated: monoubiquitinated at multiple sites within its nuclear localization signal (NLS) BY UBE2O, leading to cytoplasmic retention. Able to mediate autodeubiquitination via intramolecular interactions to counteract cytoplasmic retention. Monoubiquitinated on at least 4 sites near or within its PY-NLS. As to expression, highly expressed in testis, placenta and ovary. Expressed in breast. levels in the placenta increase over the course of pregnancy.

It is found in the cytoplasm. Its subcellular location is the nucleus. It localises to the chromosome. The catalysed reaction is Thiol-dependent hydrolysis of ester, thioester, amide, peptide and isopeptide bonds formed by the C-terminal Gly of ubiquitin (a 76-residue protein attached to proteins as an intracellular targeting signal).. In terms of biological role, deubiquitinating enzyme that plays a key role in chromatin by mediating deubiquitination of histone H2A and HCFC1. Catalytic component of the polycomb repressive deubiquitinase (PR-DUB) complex, a complex that specifically mediates deubiquitination of histone H2A monoubiquitinated at 'Lys-120' (H2AK119ub1). Does not deubiquitinate monoubiquitinated histone H2B. The PR-DUB complex is an epigenetic regulator of gene expression and acts as a transcriptional coactivator, affecting genes involved in development, cell communication, signaling, cell proliferation and cell viability. Antagonizes PRC1 mediated H2AK119ub1 monoubiquitination. As part of the PR-DUB complex, associates with chromatin enriched in histone marks H3K4me1, H3K4me3, and H3K27Ac, but not in H3K27me3. Recruited to specific gene-regulatory regions by YY1. Acts as a regulator of cell growth by mediating deubiquitination of HCFC1 N-terminal and C-terminal chains, with some specificity toward 'Lys-48'-linked polyubiquitin chains compared to 'Lys-63'-linked polyubiquitin chains. Deubiquitination of HCFC1 does not lead to increase stability of HCFC1. Interferes with the BRCA1 and BARD1 heterodimer activity by inhibiting their ability to mediate ubiquitination and autoubiquitination. It however does not mediate deubiquitination of BRCA1 and BARD1. Able to mediate autodeubiquitination via intramolecular interactions to counteract monoubiquitination at the nuclear localization signal (NLS), thereby protecting it from cytoplasmic sequestration. Negatively regulates epithelial-mesenchymal transition (EMT) of trophoblast stem cells during placental development by regulating genes involved in epithelial cell integrity, cell adhesion and cytoskeletal organization. In Homo sapiens (Human), this protein is Ubiquitin carboxyl-terminal hydrolase BAP1.